The sequence spans 211 residues: Thymidylate kinase (211 aa).

7 to 14 (GIDASGKS) provides a ligand contact to ATP.

It belongs to the thymidylate kinase family.

It carries out the reaction dTMP + ATP = dTDP + ADP. Phosphorylation of dTMP to form dTDP in both de novo and salvage pathways of dTTP synthesis. The chain is Thymidylate kinase from Mesomycoplasma hyopneumoniae (strain 7448) (Mycoplasma hyopneumoniae).